Consider the following 223-residue polypeptide: uncharacterized protein (223 aa).

It localises to the plastid. Its subcellular location is the chloroplast. This is an uncharacterized protein from Mesostigma viride (Green alga).